Reading from the N-terminus, the 433-residue chain is Trigger factor (433 aa).

One can recognise a PPIase FKBP-type domain in the interval 163–248 (GDFVTFDFKG…IKEIKVKELP (86 aa)).

This sequence belongs to the FKBP-type PPIase family. Tig subfamily.

The protein resides in the cytoplasm. The catalysed reaction is [protein]-peptidylproline (omega=180) = [protein]-peptidylproline (omega=0). Involved in protein export. Acts as a chaperone by maintaining the newly synthesized protein in an open conformation. Functions as a peptidyl-prolyl cis-trans isomerase. The chain is Trigger factor from Geotalea uraniireducens (strain Rf4) (Geobacter uraniireducens).